Here is a 143-residue protein sequence, read N- to C-terminus: MAAYLLAVAILFCIQGWPSATVQGQVMPFMEVYERSACQTRETLVSILKEYPDEVAHLFKPSCVPVLRCSGCCSDESLKCTATGKHSVGREVMRVDPHKGTSKIEVMQFKEHTDCECRPRSPGDVNNGRNPEEGEPRARFPFV.

Positions 1–24 (MAAYLLAVAILFCIQGWPSATVQG) are cleaved as a signal peptide. Gln-25 is modified (pyrrolidone carboxylic acid). Cystine bridges form between Cys-38/Cys-80, Cys-69/Cys-115, and Cys-73/Cys-117. Positions 115 to 143 (CECRPRSPGDVNNGRNPEEGEPRARFPFV) are disordered. The segment covering 130–143 (NPEEGEPRARFPFV) has biased composition (basic and acidic residues).

Belongs to the PDGF/VEGF growth factor family. Snake venom VEGF subfamily. In terms of assembly, homodimer; disulfide-linked. Interacts with VEGF receptor-2 (KDR). Post-translationally, the N-terminus is blocked for N-terminal sequencing, suggesting a Pyrrolidone carboxylic acid at Gln-25. Expressed by the venom gland.

The protein localises to the secreted. Functionally, snake venom VEGFs that may contribute to venom dispersion and prey subjugation by inducing vascular permeability and hypotension. This protein induces an increase in capillary permeability when intradermally injected into mice. Also provokes a drastic hypotensive effect after intravenous injection. The hypotension is mediated by nitric oxide (NO), which is produced by VEGF-activated endothelium NO synthase. Also induces angiogenesis in vitro. Unlike other crotalid VEGFs, this protein interacts with VEGF receptor-2 (KDR) with a high affinity (Kd=413 pM), whereas no interaction is detected with VEGF receptor-1 (FLT1). This Protobothrops jerdonii (Jerdon's pitviper) protein is Snake venom vascular endothelial growth factor toxin.